We begin with the raw amino-acid sequence, 395 residues long: uncharacterized protein (395 aa).

The segment at 247–270 (GGTVVPPNPDQPNPTPPDSSSPNY) is disordered. Pro residues predominate over residues 252-265 (PPNPDQPNPTPPDS).

This is an uncharacterized protein from Vibrio cholerae serotype O1 (strain ATCC 39315 / El Tor Inaba N16961).